We begin with the raw amino-acid sequence, 125 residues long: MRTTNHLYRTVHRQGKPLLPPLHLYRRILRAHRTFPPAQRALGDEYVKSEFKLHKNIDNPVHIIGFLASWQDYFHMISTNSWAEGTLSKSLVDQMSSEQIVQLYELMKETKQLGGASAESGSSLS.

A mitochondrion-targeting transit peptide spans 1 to 42; the sequence is MRTTNHLYRTVHRQGKPLLPPLHLYRRILRAHRTFPPAQRAL.

This sequence belongs to the complex I LYR family. SDHAF3 subfamily. Interacts with the iron-sulfur protein subunit within the SDH catalytic dimer.

The protein resides in the mitochondrion matrix. Plays an essential role in the assembly of succinate dehydrogenase (SDH), an enzyme complex (also referred to as respiratory complex II) that is a component of both the tricarboxylic acid (TCA) cycle and the mitochondrial electron transport chain, and which couples the oxidation of succinate to fumarate with the reduction of ubiquinone (coenzyme Q) to ubiquinol. Promotes maturation of the iron-sulfur protein subunit of the SDH catalytic dimer, protecting it from the deleterious effects of oxidants. May act together with SDHAF1. This chain is Succinate dehydrogenase assembly factor 3, mitochondrial, found in Eremothecium gossypii (strain ATCC 10895 / CBS 109.51 / FGSC 9923 / NRRL Y-1056) (Yeast).